We begin with the raw amino-acid sequence, 447 residues long: tRNA-2-methylthio-N(6)-dimethylallyladenosine synthase (447 aa).

Residues 3-120 (KKLYIKTNGC…LPALLNERLE (118 aa)) form the MTTase N-terminal domain. [4Fe-4S] cluster is bound by residues C12, C49, C83, C157, C161, and C164. A Radical SAM core domain is found at 143–375 (RAEGPTAFVS…QNRLLMNAAR (233 aa)). In terms of domain architecture, TRAM spans 378–441 (ESMIGSKQKI…PNSLRGRLLE (64 aa)).

This sequence belongs to the methylthiotransferase family. MiaB subfamily. In terms of assembly, monomer. [4Fe-4S] cluster is required as a cofactor.

It localises to the cytoplasm. The enzyme catalyses N(6)-dimethylallyladenosine(37) in tRNA + (sulfur carrier)-SH + AH2 + 2 S-adenosyl-L-methionine = 2-methylsulfanyl-N(6)-dimethylallyladenosine(37) in tRNA + (sulfur carrier)-H + 5'-deoxyadenosine + L-methionine + A + S-adenosyl-L-homocysteine + 2 H(+). Its function is as follows. Catalyzes the methylthiolation of N6-(dimethylallyl)adenosine (i(6)A), leading to the formation of 2-methylthio-N6-(dimethylallyl)adenosine (ms(2)i(6)A) at position 37 in tRNAs that read codons beginning with uridine. The protein is tRNA-2-methylthio-N(6)-dimethylallyladenosine synthase of Legionella pneumophila (strain Paris).